We begin with the raw amino-acid sequence, 773 residues long: FT-interacting protein 3 (773 aa).

Residues 1-16 (MQRPPPEDFSLKETRP) are compositionally biased toward basic and acidic residues. Positions 1-24 (MQRPPPEDFSLKETRPHLGGGKLS) are disordered. 3 C2 domains span residues 22–142 (KLSG…PQWY), 181–305 (VSGT…SRWY), and 345–471 (YSSD…THSY). Residues D55, D61, D108, D110, and D115 each coordinate Ca(2+). The next 3 membrane-spanning stretches (helical) occupy residues 574–594 (IMGV…ICNW), 608–628 (IILV…LFLI), and 716–736 (LFVL…FQVV).

It belongs to the MCTP family. As to quaternary structure, interacts with and regulates subcellular localization and trafficking of STM. Requires Ca(2+) as cofactor. As to expression, accumulates in vascular tissues, leaf primordia and flowers. Highly expressed in roots meristems and in both vegetative and inflorescence shoot apical meristems (SAMs).

It localises to the endoplasmic reticulum membrane. Its subcellular location is the cytoplasm. It is found in the vesicle. The protein localises to the cell membrane. The protein resides in the endosome membrane. It localises to the golgi apparatus membrane. Required for proliferation and differentiation of shoot stem cells in the shoot apical meristem (SAM), thus determining the appropriate balance between the maintenance of shoot stem cells and their differentiation into other aboveground plant parts via the control of subcellular localization and intercellular trafficking of STM in the shoot apex. Prevents intracellular trafficking of STM to the plasma membrane in cells in the peripheral shoot meristem region thus facilitating STM recycling to the nucleus to maintain stem cells. May function as a signaling molecule by regulating the trafficking of other regulators. This Arabidopsis thaliana (Mouse-ear cress) protein is FT-interacting protein 3.